A 1059-amino-acid chain; its full sequence is Isoleucine--tRNA ligase (1059 aa).

Residues 47–57 (PYTTGHIHLGT) carry the 'HIGH' region motif. A 'KMSKS' region motif is present at residues 591 to 595 (KMSKS). Lys594 serves as a coordination point for ATP.

This sequence belongs to the class-I aminoacyl-tRNA synthetase family. IleS type 2 subfamily. In terms of assembly, monomer. Zn(2+) is required as a cofactor.

It localises to the cytoplasm. The enzyme catalyses tRNA(Ile) + L-isoleucine + ATP = L-isoleucyl-tRNA(Ile) + AMP + diphosphate. In terms of biological role, catalyzes the attachment of isoleucine to tRNA(Ile). As IleRS can inadvertently accommodate and process structurally similar amino acids such as valine, to avoid such errors it has two additional distinct tRNA(Ile)-dependent editing activities. One activity is designated as 'pretransfer' editing and involves the hydrolysis of activated Val-AMP. The other activity is designated 'posttransfer' editing and involves deacylation of mischarged Val-tRNA(Ile). This is Isoleucine--tRNA ligase from Methanoculleus marisnigri (strain ATCC 35101 / DSM 1498 / JR1).